A 282-amino-acid polypeptide reads, in one-letter code: Protease HtpX homolog (282 aa).

2 helical membrane-spanning segments follow: residues 6–26 (TLVL…LIGG) and 29–49 (GATF…FFSH). His130 provides a ligand contact to Zn(2+). Glu131 is an active-site residue. His134 is a Zn(2+) binding site. The next 2 membrane-spanning stretches (helical) occupy residues 140–160 (ILIS…AQMA) and 180–200 (IVAL…QLAI). Glu205 contributes to the Zn(2+) binding site.

Belongs to the peptidase M48B family. The cofactor is Zn(2+).

The protein resides in the cell inner membrane. The polypeptide is Protease HtpX homolog (Thermodesulfovibrio yellowstonii (strain ATCC 51303 / DSM 11347 / YP87)).